The sequence spans 67 residues: Large ribosomal subunit protein bL35 (67 aa).

This sequence belongs to the bacterial ribosomal protein bL35 family.

This chain is Large ribosomal subunit protein bL35, found in Caldanaerobacter subterraneus subsp. tengcongensis (strain DSM 15242 / JCM 11007 / NBRC 100824 / MB4) (Thermoanaerobacter tengcongensis).